We begin with the raw amino-acid sequence, 135 residues long: Ribonuclease VapC35 (135 aa).

The PINc domain maps to 2 to 123 (IYLETSALVK…DNRLKEAAEA (122 aa)). The Mg(2+) site is built by E5 and D91.

Belongs to the PINc/VapC protein family. Requires Mg(2+) as cofactor.

Toxic component of a type II toxin-antitoxin (TA) system. An RNase. Its toxic effect is neutralized by coexpression with cognate antitoxin VapB35. This chain is Ribonuclease VapC35, found in Mycobacterium tuberculosis (strain CDC 1551 / Oshkosh).